Here is a 1905-residue protein sequence, read N- to C-terminus: Microtubule cross-linking factor 1 (1905 aa).

The interval 1 to 249 (METLNGPAGG…SSDREPPRGA (249 aa)) is necessary for colocalization and binding with microtubules. The interval 1-329 (METLNGPAGG…SLGEQSRLVP (329 aa)) is disordered. Residues 1–508 (METLNGPAGG…QDDSADLRCQ (508 aa)) form a necessary for self-assembly, microtubule bundling activity and apicobasal microtubule organization region. The span at 22–40 (QHHRHHHLHPVAERRRLHR) shows a compositional bias: basic residues. Low complexity-rich tracts occupy residues 63-95 (VPSSGRAPAPAAPRSPNLAGKAPPSPGSLAAPG) and 115-130 (AGARAAGGAKAALGSR). A phosphoserine mark is found at serine 77 and serine 87. 3 positions are modified to phosphoserine: serine 217, serine 221, and serine 263. The span at 268-283 (ALLAAPLAAGACPGGR) shows a compositional bias: low complexity. 3 coiled-coil regions span residues 330-404 (AAEE…EQKS), 432-483 (SVRL…SSLK), and 513-718 (KEEA…LQHE). Disordered stretches follow at residues 544-563 (YGDVDSPLPTGEAGGPPSTR), 601-631 (DMRGQQEREGPGRDHAPSIPTSPFGDSLESS), 671-694 (FEPPREPGWLGEGASPGAGGGAPL), 737-800 (LRAP…SEPC), and 842-867 (AGLRGGAPLPGPGLQGEEEQGEGDQQ). Phosphoserine is present on serine 549. Over residues 601–616 (DMRGQQEREGPGRDHA) the composition is skewed to basic and acidic residues. Serine 618 is modified (phosphoserine). The residue at position 621 (threonine 621) is a Phosphothreonine. Residues 680-692 (LGEGASPGAGGGA) show a composition bias toward gly residues. The residue at position 685 (serine 685) is a Phosphoserine. A compositionally biased stretch (basic and acidic residues) spans 741–770 (SPRDSDAESDAGKKESDGEESRLPQPKREG). Serine 776 carries the post-translational modification Phosphoserine. The segment covering 857-866 (GEEEQGEGDQ) has biased composition (acidic residues). Serine 901, serine 923, lysine 941, and threonine 975 each carry phosphoserine. The segment at 1080-1100 (GVQGGHQADGPDHDSDRGCGF) is disordered. Coiled-coil stretches lie at residues 1143–1201 (KALL…ELGS) and 1238–1278 (EKNW…KENS). The tract at residues 1265 to 1382 (EFLWRIEQLQ…EENHKGNLQR (118 aa)) is necessary for interaction with MARK2 and apicobasal microtubule bundle formation in polarized epithelial cells. Serine 1278 is subject to Phosphoserine. A disordered region spans residues 1346–1384 (ALSLDDEPEEPPAHRPEREFRNRLPEEEENHKGNLQRAV). Residues 1356–1377 (PPAHRPEREFRNRLPEEEENHK) are compositionally biased toward basic and acidic residues. 3 positions are modified to phosphoserine: serine 1385, serine 1388, and serine 1399. The residue at position 1417 (threonine 1417) is a Phosphothreonine. Serine 1421 bears the Phosphoserine mark. Residue tyrosine 1427 is modified to Phosphotyrosine. The segment at 1485–1505 (DTMTSPEHCQKQPLRSHVLTE) is disordered. Phosphoserine is present on residues serine 1514, serine 1523, serine 1561, serine 1578, serine 1583, serine 1592, and serine 1661. The segment at 1524 to 1569 (ITAAGGEGPFPTSRARGSPGDTKGGPPEPMLSRWPCTSPRHSRDYV) is disordered. 4 disordered regions span residues 1655–1689 (GSGVTSSPHKCLTPKAGGGATPVSSPSRSLRSRQV), 1707–1756 (PKYG…PVHT), 1782–1842 (GLRA…APPG), and 1863–1905 (KEER…PWGL). A phosphothreonine mark is found at threonine 1667 and threonine 1675. The segment covering 1678–1687 (SSPSRSLRSR) has biased composition (low complexity). Residues 1678 to 1773 (SSPSRSLRSR…SLFNIIDHSP (96 aa)) are necessary for colocalization and binding with microtubules. Phosphoserine is present on residues serine 1679 and serine 1683. The segment covering 1744-1756 (ARSTTTRESPVHT) has biased composition (polar residues). A phosphoserine mark is found at serine 1791, serine 1808, serine 1812, and serine 1814.

It belongs to the SOGA family. As to quaternary structure, homodimer. Associates (via N- and C-terminus domains) with microtubule filaments. In terms of assembly, interacts with MARK2; the interaction is direct. In terms of processing, phosphorylated during mitosis in a CDK1-dependent manner.

Its subcellular location is the lateral cell membrane. The protein localises to the apical cell membrane. The protein resides in the cytoplasm. It is found in the cytoskeleton. It localises to the spindle pole. Its subcellular location is the midbody. Its function is as follows. Microtubule-associated factor involved in the late phase of epithelial polarization and microtubule dynamics regulation. Plays a role in the development and maintenance of non-centrosomal microtubule bundles at the lateral membrane in polarized epithelial cells. Required for faithful chromosome segregation during mitosis. This chain is Microtubule cross-linking factor 1 (MTCL1), found in Homo sapiens (Human).